The following is a 330-amino-acid chain: MAPEENAGTELLLQGFERRFLAVRTLRSFPWQSLEAKLRDSSDSELLRDILQKTVRHPVCVKHPPSVKYAWCFLSELIKKHEAVHTEPLDKLYEVLAETLMAKESTQGHRSYLLSSGGSVTLSKSTAIISHGTTGLVTWDAALYLAEWAIENPAAFINRTVLELGSGAGLTGLAICKMCRPRAYIFSDPHSRILEQLRGNVLLNGLSLEADITGNLDSPRVTVAQLDWDVAMVHQLSAFQPDVVIAADVLYCPEAIVSLVGVLQRLAACREHKRAPEVYVAFTVRNPETCQLFTTELGRDGIRWEAEAHHDQKLFPYGEHLEMAMLNLTL.

Met-1 carries the N-acetylmethionine modification. S-adenosyl-L-methionine contacts are provided by residues Trp-139, 165–167 (GSG), Trp-228, and Ala-247.

This sequence belongs to the class I-like SAM-binding methyltransferase superfamily. EEF2KMT family. Interacts with EEF2KMT.

In Homo sapiens (Human), this protein is Putative protein N-methyltransferase FAM86B2 (FAM86B2).